The sequence spans 369 residues: tRNA/tmRNA (uracil-C(5))-methyltransferase (369 aa).

5 residues coordinate S-adenosyl-L-methionine: glutamine 192, tyrosine 221, asparagine 226, glutamate 242, and aspartate 302. Residue cysteine 327 is the Nucleophile of the active site. Glutamate 361 serves as the catalytic Proton acceptor.

The protein belongs to the class I-like SAM-binding methyltransferase superfamily. RNA M5U methyltransferase family. TrmA subfamily.

The catalysed reaction is uridine(54) in tRNA + S-adenosyl-L-methionine = 5-methyluridine(54) in tRNA + S-adenosyl-L-homocysteine + H(+). It carries out the reaction uridine(341) in tmRNA + S-adenosyl-L-methionine = 5-methyluridine(341) in tmRNA + S-adenosyl-L-homocysteine + H(+). Functionally, dual-specificity methyltransferase that catalyzes the formation of 5-methyluridine at position 54 (m5U54) in all tRNAs, and that of position 341 (m5U341) in tmRNA (transfer-mRNA). The sequence is that of tRNA/tmRNA (uracil-C(5))-methyltransferase from Haemophilus ducreyi (strain 35000HP / ATCC 700724).